Consider the following 320-residue polypeptide: Aminoacyl tRNA synthase complex-interacting multifunctional protein 2 (320 aa).

The tract at residues 82 to 162 is interaction with PRKN; sequence TPDADLDVTN…HTHSSVKSVP (81 aa). The interval 162–225 is interaction with TP53; it reads PENLLKCFGE…FLFSLFGQKH (64 aa). A GST C-terminal domain is found at 220-317; the sequence is LFGQKHNAVN…NLAPFNTALK (98 aa).

Part of the multisynthetase complex (MSC), a multisubunit complex that groups tRNA ligases for Arg (RARS1), Asp (DARS1), Gln (QARS1), Ile (IARS1), Leu (LARS1), Lys (KARS1), Met (MARS1) the bifunctional ligase for Glu and Pro (EPRS1) and the auxiliary subunits AIMP1/p43, AIMP2/p38 and EEF1E1/p18. Interacts (via N-terminus) with KARS1. Interacts with EPRS1. Forms a linear complex that contains MARS1, EEF1E1, EPRS1 and AIMP2 that is at the core of the multisubunit complex. Binds FUBP1 (via C-terminus). Interacts in both its unphosphorylated and phosphorylated forms with p53/TP53 (via N-terminus) in the nucleus following UV irradiation. Interacts (via N-terminus) with PRKN/parkin (via first RING-type domain). Interacts with TARS3. Phosphorylated on serine residues in response to UV irradiation. In terms of processing, ubiquitinated by PRKN, leading to its degradation by the proteasome. Mutant PRKN fails to ubiquitinate AIMP2 efficiently, allowing its accumulation which may contribute to neurodegeneration associated with Parkinson disease.

The protein localises to the cytoplasm. It is found in the cytosol. It localises to the nucleus. Its function is as follows. Required for assembly and stability of the aminoacyl-tRNA synthase complex. Mediates ubiquitination and degradation of FUBP1, a transcriptional activator of MYC, leading to MYC down-regulation which is required for aveolar type II cell differentiation. Blocks MDM2-mediated ubiquitination and degradation of p53/TP53. Functions as a proapoptotic factor. This Homo sapiens (Human) protein is Aminoacyl tRNA synthase complex-interacting multifunctional protein 2 (AIMP2).